The following is a 632-amino-acid chain: 1-deoxy-D-xylulose-5-phosphate synthase (632 aa).

Residues His-87 and 128–130 (GHS) each bind thiamine diphosphate. Asp-159 is a binding site for Mg(2+). Thiamine diphosphate-binding positions include 160–161 (GA), Asn-188, Phe-295, and Glu-378. Asn-188 provides a ligand contact to Mg(2+).

The protein belongs to the transketolase family. DXPS subfamily. In terms of assembly, homodimer. Mg(2+) is required as a cofactor. Requires thiamine diphosphate as cofactor.

It catalyses the reaction D-glyceraldehyde 3-phosphate + pyruvate + H(+) = 1-deoxy-D-xylulose 5-phosphate + CO2. Its pathway is metabolic intermediate biosynthesis; 1-deoxy-D-xylulose 5-phosphate biosynthesis; 1-deoxy-D-xylulose 5-phosphate from D-glyceraldehyde 3-phosphate and pyruvate: step 1/1. Its function is as follows. Catalyzes the acyloin condensation reaction between C atoms 2 and 3 of pyruvate and glyceraldehyde 3-phosphate to yield 1-deoxy-D-xylulose-5-phosphate (DXP). The sequence is that of 1-deoxy-D-xylulose-5-phosphate synthase from Pseudomonas fluorescens (strain SBW25).